The following is a 177-amino-acid chain: Chorismate pyruvate-lyase (177 aa).

Substrate contacts are provided by Met37, Arg79, Leu117, and Glu159.

It belongs to the UbiC family. In terms of assembly, monomer.

The protein resides in the cytoplasm. It catalyses the reaction chorismate = 4-hydroxybenzoate + pyruvate. Its pathway is cofactor biosynthesis; ubiquinone biosynthesis. Removes the pyruvyl group from chorismate, with concomitant aromatization of the ring, to provide 4-hydroxybenzoate (4HB) for the ubiquinone pathway. This is Chorismate pyruvate-lyase from Sodalis glossinidius (strain morsitans).